Here is a 105-residue protein sequence, read N- to C-terminus: Large ribosomal subunit protein uL24 (105 aa).

Belongs to the universal ribosomal protein uL24 family. Part of the 50S ribosomal subunit.

Functionally, one of two assembly initiator proteins, it binds directly to the 5'-end of the 23S rRNA, where it nucleates assembly of the 50S subunit. In terms of biological role, one of the proteins that surrounds the polypeptide exit tunnel on the outside of the subunit. The chain is Large ribosomal subunit protein uL24 from Staphylococcus aureus (strain Mu3 / ATCC 700698).